A 72-amino-acid chain; its full sequence is DNA gyrase inhibitor YacG (72 aa).

Residues Cys-7, Cys-10, Cys-26, and Cys-30 each coordinate Zn(2+). The segment at 44–72 (SIAGEEHTPSSDTARPQLSAEDLALLEQD) is disordered.

Belongs to the DNA gyrase inhibitor YacG family. In terms of assembly, interacts with GyrB. Zn(2+) is required as a cofactor.

Functionally, inhibits all the catalytic activities of DNA gyrase by preventing its interaction with DNA. Acts by binding directly to the C-terminal domain of GyrB, which probably disrupts DNA binding by the gyrase. In Tolumonas auensis (strain DSM 9187 / NBRC 110442 / TA 4), this protein is DNA gyrase inhibitor YacG.